Here is a 161-residue protein sequence, read N- to C-terminus: 2-C-methyl-D-erythritol 2,4-cyclodiphosphate synthase (161 aa).

A divalent metal cation contacts are provided by aspartate 8 and histidine 10. 4-CDP-2-C-methyl-D-erythritol 2-phosphate-binding positions include 8–10 (DLH) and 34–35 (HS). An a divalent metal cation-binding site is contributed by histidine 42. Residues 56–58 (DIG), 100–106 (AEYPKML), and arginine 142 each bind 4-CDP-2-C-methyl-D-erythritol 2-phosphate.

Belongs to the IspF family. As to quaternary structure, homotrimer. A divalent metal cation is required as a cofactor.

It carries out the reaction 4-CDP-2-C-methyl-D-erythritol 2-phosphate = 2-C-methyl-D-erythritol 2,4-cyclic diphosphate + CMP. Its pathway is isoprenoid biosynthesis; isopentenyl diphosphate biosynthesis via DXP pathway; isopentenyl diphosphate from 1-deoxy-D-xylulose 5-phosphate: step 4/6. Functionally, involved in the biosynthesis of isopentenyl diphosphate (IPP) and dimethylallyl diphosphate (DMAPP), two major building blocks of isoprenoid compounds. Catalyzes the conversion of 4-diphosphocytidyl-2-C-methyl-D-erythritol 2-phosphate (CDP-ME2P) to 2-C-methyl-D-erythritol 2,4-cyclodiphosphate (ME-CPP) with a corresponding release of cytidine 5-monophosphate (CMP). The chain is 2-C-methyl-D-erythritol 2,4-cyclodiphosphate synthase from Buchnera aphidicola subsp. Acyrthosiphon pisum (strain 5A).